We begin with the raw amino-acid sequence, 205 residues long: Holliday junction branch migration complex subunit RuvA (205 aa).

The interval 1 to 64 (MIGKLKGLID…EDQIKLFGFR (64 aa)) is domain I. The interval 65–143 (TDHEREWFRL…ALSNVDPAVV (79 aa)) is domain II. The interval 144-154 (QLSGALDDNRA) is flexible linker. Residues 154-205 (APRPVTDAISALVNLGYGQPQAAAAIAAAARAAGDDAATAQLIKLGLKELSK) are domain III.

This sequence belongs to the RuvA family. As to quaternary structure, homotetramer. Forms an RuvA(8)-RuvB(12)-Holliday junction (HJ) complex. HJ DNA is sandwiched between 2 RuvA tetramers; dsDNA enters through RuvA and exits via RuvB. An RuvB hexamer assembles on each DNA strand where it exits the tetramer. Each RuvB hexamer is contacted by two RuvA subunits (via domain III) on 2 adjacent RuvB subunits; this complex drives branch migration. In the full resolvosome a probable DNA-RuvA(4)-RuvB(12)-RuvC(2) complex forms which resolves the HJ.

It is found in the cytoplasm. The RuvA-RuvB-RuvC complex processes Holliday junction (HJ) DNA during genetic recombination and DNA repair, while the RuvA-RuvB complex plays an important role in the rescue of blocked DNA replication forks via replication fork reversal (RFR). RuvA specifically binds to HJ cruciform DNA, conferring on it an open structure. The RuvB hexamer acts as an ATP-dependent pump, pulling dsDNA into and through the RuvAB complex. HJ branch migration allows RuvC to scan DNA until it finds its consensus sequence, where it cleaves and resolves the cruciform DNA. This Rhodopseudomonas palustris (strain BisB5) protein is Holliday junction branch migration complex subunit RuvA.